The sequence spans 436 residues: MHIVVVGLSHRTAPVEVREKLSIPDQSITESLKALKAFSDVLEVSILSTCNRMEIYALVKDKNTGISSIKEFISEYSGIIFEDLNPHLFCFRQEEAVLHLMKVSAGLDSLVLGEGQILSQVKKMMRLGQENQSTGPILNRLLTQSVSTGKKVRSETNLGTGAVSISSAAVELAQLKIGQEKGFDTLVSLESENVLVVGAGRMSRLLITHLKSKGCHKLILLNRNIDRALNLAQDFPDLEIVCRGLNELEENISLSSIVFTSTASEEPIIDLAKIEKLNLSNRLKFIDIGVPRNISNDVKQHQFVKSFDVDDLQEVVSRNQEFRQKIAKEAESLVEEERIIFLEWWASLEAVPVINKLRSDLELIRKEELQKALSRMGPDFSARERKVVEALTKGIINKILHTPVTKLRSPQSREERQVSLKIVEKLFSLVEEEQNN.

Substrate is bound by residues 49–52 (TCNR), Ser-109, 114–116 (EGQ), and Gln-120. The Nucleophile role is filled by Cys-50. Residue 198 to 203 (GAGRMS) participates in NADP(+) binding.

The protein belongs to the glutamyl-tRNA reductase family. Homodimer.

It catalyses the reaction (S)-4-amino-5-oxopentanoate + tRNA(Glu) + NADP(+) = L-glutamyl-tRNA(Glu) + NADPH + H(+). The protein operates within porphyrin-containing compound metabolism; protoporphyrin-IX biosynthesis; 5-aminolevulinate from L-glutamyl-tRNA(Glu): step 1/2. Its pathway is porphyrin-containing compound metabolism; chlorophyll biosynthesis. Catalyzes the NADPH-dependent reduction of glutamyl-tRNA(Glu) to glutamate 1-semialdehyde (GSA). This chain is Glutamyl-tRNA reductase, found in Prochlorococcus marinus (strain AS9601).